The primary structure comprises 435 residues: NAD-specific glutamate dehydrogenase A (435 aa).

A disordered region spans residues Met1–Leu28. Residues Ser14 to Glu23 show a composition bias toward acidic residues. Residue Lys126 is part of the active site.

This sequence belongs to the Glu/Leu/Phe/Val dehydrogenases family. Homohexamer. In terms of processing, the N-terminus is blocked.

The enzyme catalyses L-glutamate + NAD(+) + H2O = 2-oxoglutarate + NH4(+) + NADH + H(+). Inhibited by ethanol, acetone, acetonitrile and 2-propanol (65 to 70% inhibition) and to a lesser extent by methanol and dimethyl formamide (26 and 49 % inhibition respectively). No effect of glycerol or DMSO. In Halobacterium salinarum (Halobacterium halobium), this protein is NAD-specific glutamate dehydrogenase A (gdhX).